The chain runs to 619 residues: Probable Xaa-Pro aminopeptidase P (619 aa).

Mn(2+) contacts are provided by Asp-416, Asp-427, Glu-525, and Glu-539.

This sequence belongs to the peptidase M24B family. Requires Mn(2+) as cofactor.

It catalyses the reaction Release of any N-terminal amino acid, including proline, that is linked to proline, even from a dipeptide or tripeptide.. Its function is as follows. Catalyzes the removal of a penultimate prolyl residue from the N-termini of peptides. In Tuber melanosporum (strain Mel28) (Perigord black truffle), this protein is Probable Xaa-Pro aminopeptidase P (AMPP).